The following is a 106-amino-acid chain: MDLMGMMGKLKETQQKIEDTKKRLDTVLIDEQSADGLLKITVTANRKVKSISIDDSLLEDKEQLEDYLVVTLNKVIEKATSVNERELDAVARMDMPSIPGMDNLFK.

The protein belongs to the YbaB/EbfC family. As to quaternary structure, homodimer.

The protein localises to the cytoplasm. Its subcellular location is the nucleoid. Its function is as follows. Binds to DNA and alters its conformation. May be involved in regulation of gene expression, nucleoid organization and DNA protection. This is Nucleoid-associated protein Fjoh_2555 from Flavobacterium johnsoniae (strain ATCC 17061 / DSM 2064 / JCM 8514 / BCRC 14874 / CCUG 350202 / NBRC 14942 / NCIMB 11054 / UW101) (Cytophaga johnsonae).